Consider the following 434-residue polypeptide: F-box/kelch-repeat protein At1g55270 (434 aa).

The F-box domain occupies 76–122 (PPLLPGLPDDLAVACLIRVPRAEHRKLRLVCKRWYRLASGNFFYSQR). 5 Kelch repeats span residues 129-178 (EEWV…VLSG), 180-227 (HLYL…VINN), 229-276 (LYVA…VYDK), 278-321 (WFLK…SLNG), and 325-371 (GLDC…LHNK).

In Arabidopsis thaliana (Mouse-ear cress), this protein is F-box/kelch-repeat protein At1g55270.